A 58-amino-acid chain; its full sequence is U11-myrmicitoxin-Tb1a (58 aa).

A propeptide spanning residues 1–24 (LAMAMGDAVADAQARAMAAAYAIA) is cleaved from the precursor. Cys34 and Cys57 are oxidised to a cystine.

It belongs to the formicidae venom precursor-01 superfamily. In terms of tissue distribution, expressed by the venom gland.

The protein localises to the secreted. The protein resides in the target cell membrane. Its function is as follows. Neurotoxin that causes irreversible rapid flaccid paralysis in blowflies and honeybees upon intrathoracic injection. Causes a quick and irreversible cytolytic effect (at 10 uM) indicating it possibly acts as a pore-forming peptide. Shows only weak effect on aphids (A.pisum) at high doses 24 hours post intrathoracic injection. In vitro, is not cytotoxic on the dipteran S2 Drosophila embryonic cell line. The protein is U11-myrmicitoxin-Tb1a of Tetramorium bicarinatum (Tramp ant).